Consider the following 394-residue polypeptide: Dihydroorotase (394 aa).

The Zn(2+) site is built by histidine 15, histidine 17, lysine 98, histidine 135, histidine 175, and aspartate 245. Position 98 is an N6-carboxylysine (lysine 98).

Belongs to the metallo-dependent hydrolases superfamily. DHOase family. Class II DHOase subfamily. Zn(2+) is required as a cofactor.

It catalyses the reaction (S)-dihydroorotate + H2O = N-carbamoyl-L-aspartate + H(+). Its pathway is pyrimidine metabolism; UMP biosynthesis via de novo pathway; (S)-dihydroorotate from bicarbonate: step 3/3. The protein is Dihydroorotase (PYR3) of Mycosarcoma maydis (Corn smut fungus).